The chain runs to 657 residues: Glycogen debranching enzyme (657 aa).

Aspartate 336 (nucleophile) is an active-site residue. The active-site Proton donor is the glutamate 371. The interval 460–479 is disordered; it reads ANGEENRDGTNNNYSNNHGK.

The protein belongs to the glycosyl hydrolase 13 family.

The catalysed reaction is Hydrolysis of (1-&gt;6)-alpha-D-glucosidic linkages to branches with degrees of polymerization of three or four glucose residues in limit dextrin.. The protein operates within glycan degradation; glycogen degradation. Removes maltotriose and maltotetraose chains that are attached by 1,6-alpha-linkage to the limit dextrin main chain, generating a debranched limit dextrin. In Shigella flexneri serotype 5b (strain 8401), this protein is Glycogen debranching enzyme.